A 208-amino-acid polypeptide reads, in one-letter code: Calaxin (208 aa).

EF-hand domains are found at residues 64-99 (TDDM…FLHG), 100-135 (TLEE…SLLK), and 145-180 (GVKD…ENLL). Positions 77, 79, 81, 113, 115, 117, 119, 124, 158, 160, 162, 164, and 169 each coordinate Ca(2+).

As to quaternary structure, component of the outer dynein arm-docking complex along with ODAD1, ODAD2, ODAD3 and ODAD4.

The protein localises to the cytoplasm. It is found in the cytoskeleton. Its subcellular location is the cilium axoneme. The protein resides in the cell projection. It localises to the cilium. The protein localises to the flagellum. Its function is as follows. Component of the outer dynein arm-docking complex (ODA-DC) that mediates outer dynein arms (ODA) binding onto the doublet microtubule. Seems to regulate the assembly of both ODAs and their axonemal docking complex onto ciliary microtubules. Regulates ciliary and flagellar motility and is required for cilia-driven determination of body laterality. This Xenopus laevis (African clawed frog) protein is Calaxin (clxn).